Consider the following 207-residue polypeptide: MSTPSIHCLKPSPLHLPSGIPGSPGRQRRHTLPANEFRCLTPKDAAGVFEIEREAFISVSGNCPLNLDEVRHFLTLCPELSLGWFVEGRLVAFIIGSLWDEERLTQESLTLHRPGGRTAHLHALAVHHSFRQQGKGSVLLWRYLQHAGGQPAVRRAVLMCEDALVPFYQRFGFHPAGPCAVVVGSLTFTEMHCSLRGHAALRRNSDR.

Thr-31 is subject to Phosphothreonine; by PKA. In terms of domain architecture, N-acetyltransferase spans 35–196; the sequence is NEFRCLTPKD…TFTEMHCSLR (162 aa). Residue Leu-124 participates in substrate binding. Acetyl-CoA contacts are provided by residues 124–126 and 132–137; these read LAV and QQGKGS. Met-159 is a substrate binding site. 168 to 170 is a binding site for acetyl-CoA; the sequence is YQR. Phosphoserine is present on Ser-205.

This sequence belongs to the acetyltransferase family. AANAT subfamily. In terms of assembly, monomer. Interacts with several 14-3-3 proteins, including YWHAB, YWHAE, YWHAG and YWHAZ, preferentially when phosphorylated at Thr-31. Phosphorylation on Ser-205 also allows binding to YWHAZ, but with lower affinity. The interaction with YWHAZ considerably increases affinity for arylalkylamines and acetyl-CoA and protects the enzyme from dephosphorylation and proteasomal degradation. It may also prevent thiol-dependent inactivation. CAMP-dependent phosphorylation on both N-terminal Thr-31 and C-terminal Ser-205 regulates AANAT activity by promoting interaction with 14-3-3 proteins. In terms of tissue distribution, high levels in pineal gland and retina.

It localises to the cytoplasm. The catalysed reaction is a 2-arylethylamine + acetyl-CoA = an N-acetyl-2-arylethylamine + CoA + H(+). Its pathway is aromatic compound metabolism; melatonin biosynthesis; melatonin from serotonin: step 1/2. Functionally, controls the night/day rhythm of melatonin production in the pineal gland. Catalyzes the N-acetylation of serotonin into N-acetylserotonin, the penultimate step in the synthesis of melatonin. This chain is Serotonin N-acetyltransferase (AANAT), found in Bos taurus (Bovine).